The primary structure comprises 506 residues: Maturase K (506 aa).

This sequence belongs to the intron maturase 2 family. MatK subfamily.

Its subcellular location is the plastid. The protein resides in the chloroplast. Its function is as follows. Usually encoded in the trnK tRNA gene intron. Probably assists in splicing its own and other chloroplast group II introns. In Trifolium incarnatum (Crimson clover), this protein is Maturase K.